A 2543-amino-acid chain; its full sequence is Highly reducing polyketide synthase PKS2 (2543 aa).

One can recognise a Ketosynthase family 3 (KS3) domain in the interval 4–425 (EPRIAVIGLS…GSNSAILLEG (422 aa)). Residues cysteine 174, histidine 309, and histidine 349 each act as for beta-ketoacyl synthase activity in the active site. The tract at residues 573-902 (VFTGQGAQHA…TYLPTLFRGT (330 aa)) is malonyl-CoA:ACP transacylase (MAT) domain. Catalysis depends on serine 662, which acts as the For malonyltransferase activity. The N-terminal hotdog fold stretch occupies residues 969–1101 (HPLLGRKISP…GQIEAEMTDM (133 aa)). Positions 969–1281 (HPLLGRKISP…FRNIGSAEEV (313 aa)) constitute a PKS/mFAS DH domain. The dehydratase (DH) domain stretch occupies residues 969-1283 (HPLLGRKISP…NIGSAEEVID (315 aa)). Residue histidine 1001 is the Proton acceptor; for dehydratase activity of the active site. The C-terminal hotdog fold stretch occupies residues 1119–1281 (TGLKEHDINA…FRNIGSAEEV (163 aa)). Aspartate 1188 acts as the Proton donor; for dehydratase activity in catalysis. The tract at residues 1438–1631 (SKVLGYLTEY…LPSRYGTDKP (194 aa)) is methyltransferase (CMet) domain. The segment at 1847-2159 (GSPDTIYFQR…SGEHMGKMVI (313 aa)) is enoylreductase (ER) domain. A ketoreductase (KR) domain region spans residues 2184 to 2359 (ATYLVAGGTR…YTVSIALPVV (176 aa)). The region spanning 2463–2540 (DPLIGLTEAM…ALATEILSQR (78 aa)) is the Carrier domain. Serine 2500 carries the O-(pantetheine 4'-phosphoryl)serine modification.

It participates in secondary metabolite biosynthesis. Highly reducing polyketide synthase; part of the gene cluster that mediates the biosynthesis of phomenoic acid, a long chain aliphatic carboxylic acid that does not appear to be essential for pathogenicity but may play a role in allowing to outcompete other fungi in the environmental niche via its antifungal properties. The polyketide synthase produces the long methylated aliphatic carboxylic acid chain of phomenoic acid. The cluster-specific cytochrome P450 monooxygenase may then hydroxylate the methyl group of carbon 31. The putative dehydrogenase YogA, which has no obvious role in phomenoic acid biosynthesis, may further modify phomenoic acid to produce a compound not identified yet. This Leptosphaeria maculans (strain JN3 / isolate v23.1.3 / race Av1-4-5-6-7-8) (Blackleg fungus) protein is Highly reducing polyketide synthase PKS2.